The chain runs to 401 residues: Ornithine aminotransferase (401 aa).

Lys258 is modified (N6-(pyridoxal phosphate)lysine).

This sequence belongs to the class-III pyridoxal-phosphate-dependent aminotransferase family. OAT subfamily. Pyridoxal 5'-phosphate serves as cofactor.

The protein resides in the cytoplasm. The enzyme catalyses a 2-oxocarboxylate + L-ornithine = L-glutamate 5-semialdehyde + an L-alpha-amino acid. It functions in the pathway amino-acid biosynthesis; L-proline biosynthesis; L-glutamate 5-semialdehyde from L-ornithine: step 1/1. In terms of biological role, catalyzes the interconversion of ornithine to glutamate semialdehyde. The protein is Ornithine aminotransferase of Bacillus subtilis (strain 168).